The primary structure comprises 106 residues: Large ribosomal subunit protein eL42 (106 aa).

The segment at 34-53 (YAQGKRRYDRKQSGYGGQTK) is disordered.

The protein belongs to the eukaryotic ribosomal protein eL42 family. Component of the large ribosomal subunit.

The protein resides in the cytoplasm. Its function is as follows. Component of the large ribosomal subunit. The ribosome is a large ribonucleoprotein complex responsible for the synthesis of proteins in the cell. In Canis lupus familiaris (Dog), this protein is Large ribosomal subunit protein eL42 (Rpl36a).